Consider the following 737-residue polypeptide: Cellulose synthase-like protein E1 (737 aa).

2 helical membrane passes run 26 to 45 and 58 to 78; these read AVYRVQAATVAAGILLVLYY and AAWLGMAAAELWFAVYWVIAQ. Active-site residues include Asp-146 and Asp-451. Helical transmembrane passes span 528–548, 551–571, 654–674, 683–703, and 716–736; these read LWAANSLPTLYYVVIPSLGLV, TPLFPQIMSPWATPFIYVFCV, VIIATVALLNFVCLVGGLSQI, WNVFLPQAILCGMIVIINMPI, and IPTAVTLASIGFVMLAFLVPI.

This sequence belongs to the glycosyltransferase 2 family. Plant cellulose synthase-like E subfamily.

The protein resides in the golgi apparatus membrane. In terms of biological role, thought to be a Golgi-localized beta-glycan synthase that polymerize the backbones of noncellulosic polysaccharides (hemicelluloses) of plant cell wall. The chain is Cellulose synthase-like protein E1 (CSLE1) from Oryza sativa subsp. japonica (Rice).